A 199-amino-acid chain; its full sequence is Probable GTP-binding protein EngB (199 aa).

In terms of domain architecture, EngB-type G spans 28–199 (DLPEIALAGR…DSWDAILEQV (172 aa)). GTP-binding positions include 36-43 (GRSNVGKS), 63-67 (GKTQL), 81-84 (DVPG), 148-151 (TKAD), and 180-182 (FSS). Positions 43 and 65 each coordinate Mg(2+).

It belongs to the TRAFAC class TrmE-Era-EngA-EngB-Septin-like GTPase superfamily. EngB GTPase family. It depends on Mg(2+) as a cofactor.

In terms of biological role, necessary for normal cell division and for the maintenance of normal septation. This is Probable GTP-binding protein EngB from Streptococcus pyogenes serotype M3 (strain SSI-1).